The following is a 311-amino-acid chain: Protoheme IX farnesyltransferase (311 aa).

8 consecutive transmembrane segments (helical) span residues Val-19–Ile-39, Ile-55–Val-75, Asn-101–Ala-121, Leu-123–Gly-143, Ala-169–Thr-189, Val-221–Pro-241, Ala-242–Ala-262, and Val-290–Phe-310.

The protein belongs to the UbiA prenyltransferase family. Protoheme IX farnesyltransferase subfamily.

Its subcellular location is the cell membrane. It carries out the reaction heme b + (2E,6E)-farnesyl diphosphate + H2O = Fe(II)-heme o + diphosphate. The protein operates within porphyrin-containing compound metabolism; heme O biosynthesis; heme O from protoheme: step 1/1. Its function is as follows. Converts heme B (protoheme IX) to heme O by substitution of the vinyl group on carbon 2 of heme B porphyrin ring with a hydroxyethyl farnesyl side group. The polypeptide is Protoheme IX farnesyltransferase (Nocardia farcinica (strain IFM 10152)).